The primary structure comprises 894 residues: Microsomal triglyceride transfer protein large subunit (894 aa).

The signal sequence occupies residues 1–18 (MILLAVLFLCFISSYSAS). The Vitellogenin domain occupies 28-659 (LNNDRLYKLT…IFQYIGKAGL (632 aa)). The cysteines at positions 174 and 194 are disulfide-linked.

Heterodimer; heterodimerizes with the protein disulfide isomerase (P4HB/PDI). Interacts with APOB. Interacts with PRAP1. Liver and small intestine. Also found in ovary, testis and kidney.

The protein localises to the endoplasmic reticulum. It localises to the golgi apparatus. It carries out the reaction a 1,2-diacyl-sn-glycero-3-phosphocholine(in) = a 1,2-diacyl-sn-glycero-3-phosphocholine(out). It catalyses the reaction a 1,2-diacyl-sn-glycero-3-phosphoethanolamine(in) = a 1,2-diacyl-sn-glycero-3-phosphoethanolamine(out). The enzyme catalyses a cholesterol ester(in) = a cholesterol ester(out). The catalysed reaction is a triacyl-sn-glycerol(in) = a triacyl-sn-glycerol(out). In terms of biological role, catalyzes the transport of triglyceride, cholesteryl ester, and phospholipid between phospholipid surfaces. Required for the assembly and secretion of plasma lipoproteins that contain apolipoprotein B. May be involved in regulating cholesteryl ester biosynthesis in cells that produce lipoproteins. This is Microsomal triglyceride transfer protein large subunit (MTTP) from Homo sapiens (Human).